Reading from the N-terminus, the 332-residue chain is UPF0194 membrane protein YbhG (332 aa).

The first 16 residues, 1-16 (MMKKPVVIGLAVVVLA), serve as a signal peptide directing secretion. Residues 108–209 (EEIAQAAAAV…LNLQDSTLIA (102 aa)) adopt a coiled-coil conformation.

The protein belongs to the UPF0194 family.

It is found in the periplasm. This is UPF0194 membrane protein YbhG from Shigella boydii serotype 4 (strain Sb227).